Consider the following 81-residue polypeptide: Sulfur carrier protein TusA (81 aa).

Residue Cys19 is the Cysteine persulfide intermediate of the active site.

It belongs to the sulfur carrier protein TusA family.

The protein localises to the cytoplasm. In terms of biological role, sulfur carrier protein which probably makes part of a sulfur-relay system. In Shewanella frigidimarina (strain NCIMB 400), this protein is Sulfur carrier protein TusA.